A 1161-amino-acid chain; its full sequence is Lysine-specific demethylase 2A (1161 aa).

The residue at position 28 (serine 28) is a Phosphoserine. The JmjC domain occupies 148–316 (FSHTRLENMV…MQLKIYSIED (169 aa)). Residue threonine 209 participates in substrate binding. Fe cation is bound by residues histidine 212 and aspartate 214. Substrate is bound at residue lysine 229. Residue histidine 284 participates in Fe cation binding. Phosphoserine is present on residues serine 390 and serine 394. The segment covering 419 to 433 (KTLSGDSSSDSTRGS) has biased composition (low complexity). The tract at residues 419 to 445 (KTLSGDSSSDSTRGSHNGQVWDPQCSP) is disordered. Serine 444 bears the Phosphoserine mark. A Glycyl lysine isopeptide (Lys-Gly) (interchain with G-Cter in SUMO2) cross-link involves residue lysine 505. The interval 532–557 (VPTIPITKPHTMKPAPRLTPVRPAAA) is disordered. Residue threonine 550 is modified to Phosphothreonine. Serine 558 bears the Phosphoserine mark. The segment at 564 to 610 (ARRRRVRCRKCKACVQGECGVCHYCRDMKKFGGPGRMKQSCVLRQCL) adopts a CXXC-type zinc-finger fold. Residues cysteine 571, cysteine 574, cysteine 577, cysteine 582, cysteine 585, cysteine 588, cysteine 604, cysteine 609, cysteine 620, and cysteine 623 each coordinate Zn(2+). The segment at 617–678 (SVTCSLCGEV…CWECPKCYQE (62 aa)) adopts a PHD-type zinc-finger fold. Threonine 632 carries the phosphothreonine modification. Zn(2+)-binding residues include cysteine 642, cysteine 645, histidine 650, cysteine 653, cysteine 672, and cysteine 675. Serine 692 carries the post-translational modification Phosphoserine. The tract at residues 705–789 (LRSCEEPLTP…PSGKKELSEV (85 aa)) is disordered. Position 713 is a phosphothreonine (threonine 713). A phosphoserine mark is found at serine 718 and serine 731. Composition is skewed to basic and acidic residues over residues 746-757 (SDHHSASRDERF) and 771-789 (TMVR…LSEV). Residues serine 825, serine 868, and serine 882 each carry the phosphoserine modification. Residues 840-886 (CPARNPQHGDEEGLGGEEEEEEEEEEDDSAEEGGAARLNGRGSWAQD) are disordered. Acidic residues predominate over residues 851–870 (EGLGGEEEEEEEEEEDDSAE). In terms of domain architecture, F-box spans 888 to 935 (DESWMQREVWMSVFRYLSRKELCECMRVCKTWYKWCCDKRLWTKIDLS). LRR repeat units follow at residues 960-981 (WTNI…LKDL) and 983-1009 (LAGC…DLRW). An ADP-ribosylarginine modification is found at arginine 1019. LRR repeat units follow at residues 1047–1072 (GLDI…DLSH), 1073–1102 (CSHL…NMAG), 1103–1127 (CNKL…DLRG), and 1128–1155 (CKQI…SDEK).

Belongs to the JHDM1 histone demethylase family. Part of a SCF (SKP1-cullin-F-box) protein ligase complex. Interacts with CBX5/HP1A; the interaction promotes CBX5 localization to chromatin. The SKP1-KDM2A complex interacts with UBB. It depends on Fe(2+) as a cofactor. Post-translationally, mono-ADP-ribosylated at Arg-1019 in response to DNA damage, leading to displacement from chromatin, resulting in increased dimethylation of histone H3 at 'Lys-36'.

The protein localises to the nucleus. It localises to the nucleoplasm. The protein resides in the chromosome. The catalysed reaction is N(6),N(6)-dimethyl-L-lysyl(36)-[histone H3] + 2 2-oxoglutarate + 2 O2 = L-lysyl(36)-[histone H3] + 2 formaldehyde + 2 succinate + 2 CO2. Histone demethylase that specifically demethylates 'Lys-36' of histone H3, thereby playing a central role in histone code. Preferentially demethylates dimethylated H3 'Lys-36' residue while it has weak or no activity for mono- and tri-methylated H3 'Lys-36'. May also recognize and bind to some phosphorylated proteins and promote their ubiquitination and degradation. Required to maintain the heterochromatic state. Associates with centromeres and represses transcription of small non-coding RNAs that are encoded by the clusters of satellite repeats at the centromere. Required to sustain centromeric integrity and genomic stability, particularly during mitosis. Regulates circadian gene expression by repressing the transcriptional activator activity of CLOCK-BMAL1 heterodimer and RORA in a catalytically-independent manner. This is Lysine-specific demethylase 2A (Kdm2a) from Mus musculus (Mouse).